Consider the following 127-residue polypeptide: Large ribosomal subunit protein bL17 (127 aa).

The protein belongs to the bacterial ribosomal protein bL17 family. In terms of assembly, part of the 50S ribosomal subunit. Contacts protein L32.

The sequence is that of Large ribosomal subunit protein bL17 from Leuconostoc citreum (strain KM20).